The chain runs to 410 residues: Lysosome-associated membrane glycoprotein 2 (410 aa).

The signal sequence occupies residues 1–28 (MVCFRLFPVPGSGLVLVCLVLGAVRSYA). The first lumenal domain stretch occupies residues 29 to 192 (LELNLTDSEN…STNEFLCDKD (164 aa)). Over 29–375 (LELNLTDSEN…QDCSADDDNF (347 aa)) the chain is Lumenal. N-linked (GlcNAc...) (polylactosaminoglycan) asparagine glycans are attached at residues Asn32 and Asn38. A disulfide bridge connects residues Cys41 and Cys79. Asn49, Asn58, Asn75, Asn101, Asn123, and Asn179 each carry an N-linked (GlcNAc...) asparagine glycan. Cysteines 153 and 189 form a disulfide. A hinge region spans residues 193 to 228 (KTSTVAPTIHTTVPSPTTTPTPKEKPEAGTYSVNNG). O-linked (GalNAc...) serine glycosylation occurs at Ser195. O-linked (GalNAc...) threonine glycosylation is found at Thr196, Thr200, Thr203, and Thr204. Residues 199 to 213 (PTIHTTVPSPTTTPT) show a composition bias toward low complexity. Residues 199–221 (PTIHTTVPSPTTTPTPKEKPEAG) are disordered. Ser207 is a glycosylation site (O-linked (GalNAc...) serine; partial). Thr209 carries an O-linked (GalNAc...) threonine; partial glycan. 2 O-linked (GalNAc...) threonine glycosylation sites follow: Thr210 and Thr211. O-linked (GalNAc...) threonine; partial glycosylation occurs at Thr213. Residues Asn229, Asn242, Asn257, Asn275, and Asn300 are each glycosylated (N-linked (GlcNAc...) asparagine). A second lumenal domain region spans residues 229–375 (NDTCLLATMG…QDCSADDDNF (147 aa)). Cys232 and Cys265 are oxidised to a cystine. N-linked (GlcNAc...) (polylactosaminoglycan) asparagine glycosylation occurs at Asn307. Residues Asn317 and Asn356 are each glycosylated (N-linked (GlcNAc...) asparagine). The cysteines at positions 331 and 368 are disulfide-linked. The chain crosses the membrane as a helical span at residues 376 to 399 (LVPIAVGAALAGVLILVLLAYFIG). At 400–410 (LKHHHAGYEQF) the chain is on the cytoplasmic side. Residues 401–404 (KHHH) are important for binding and subsequent lysosomal degradation of target proteins.

Belongs to the LAMP family. Monomer. Homodimer. Homotrimer. Forms large homooligomers. Interacts (via its cytoplasmic region) with HSPA8; HSPA8 mediates recruitment of proteins with a KFERQ motif to the surface of the lysosome for chaperone-mediated autophagy. Interacts with HSP90 in the lysosome lumen; this enhances LAMP2 stability. Interacts with MLLT11. Interacts with ABCB9. Interacts with FURIN. Interacts with CT55; this interaction may be important for LAMP2 protein stability. Interacts with TMEM175; inhibiting the proton channel activity of TMEM175. Forms a ternary complex with RAB7A and RUFY4 (via RUN domain); the interaction with RAB7A is mediated by RUFY4 (via RUN and coiled coil domains). As to quaternary structure, (Microbial infection) Interacts with mumps virus protein F; this interaction promotes protein F cleavage by FURIN. In terms of processing, O- and N-glycosylated; some of the 16 N-linked glycans are polylactosaminoglycans. In terms of tissue distribution, isoform LAMP-2A is highly expressed in placenta, lung and liver, less in kidney and pancreas, low in brain and skeletal muscle. Isoform LAMP-2B is detected in spleen, thymus, prostate, testis, small intestine, colon, skeletal muscle, brain, placenta, lung, kidney, ovary and pancreas and liver. Isoform LAMP-2C is detected in small intestine, colon, heart, brain, skeletal muscle, and at lower levels in kidney and placenta.

It localises to the lysosome membrane. The protein localises to the endosome membrane. It is found in the cell membrane. The protein resides in the cytoplasmic vesicle. Its subcellular location is the autophagosome membrane. Lysosomal membrane glycoprotein which plays an important role in lysosome biogenesis, lysosomal pH regulation and autophagy. Acts as an important regulator of lysosomal lumen pH regulation by acting as a direct inhibitor of the proton channel TMEM175, facilitating lysosomal acidification for optimal hydrolase activity. Plays an important role in chaperone-mediated autophagy, a process that mediates lysosomal degradation of proteins in response to various stresses and as part of the normal turnover of proteins with a long biological half-live. Functions by binding target proteins, such as GAPDH, NLRP3 and MLLT11, and targeting them for lysosomal degradation. In the chaperone-mediated autophagy, acts downstream of chaperones, such as HSPA8/HSC70, which recognize and bind substrate proteins and mediate their recruitment to lysosomes, where target proteins bind LAMP2. Plays a role in lysosomal protein degradation in response to starvation. Required for the fusion of autophagosomes with lysosomes during autophagy. Cells that lack LAMP2 express normal levels of VAMP8, but fail to accumulate STX17 on autophagosomes, which is the most likely explanation for the lack of fusion between autophagosomes and lysosomes. Required for normal degradation of the contents of autophagosomes. Required for efficient MHC class II-mediated presentation of exogenous antigens via its function in lysosomal protein degradation; antigenic peptides generated by proteases in the endosomal/lysosomal compartment are captured by nascent MHC II subunits. Is not required for efficient MHC class II-mediated presentation of endogenous antigens. Its function is as follows. Modulates chaperone-mediated autophagy. Decreases presentation of endogenous antigens by MHCII. Does not play a role in the presentation of exogenous and membrane-derived antigens by MHCII. Functionally, (Microbial infection) Supports the FURIN-mediated cleavage of mumps virus fusion protein F by interacting with both FURIN and the unprocessed form but not the processed form of the viral protein F. The chain is Lysosome-associated membrane glycoprotein 2 (LAMP2) from Homo sapiens (Human).